The sequence spans 380 residues: Guanine nucleotide-binding protein subunit beta (380 aa).

WD repeat units follow at residues 64-103 (GHSGKVYSLDWTPEKNWIVSASQDGRLIVWNALTSQKTHA), 106-145 (LHCPWVMTCAFAPNGQSVACGGLDSACSIFNLNSQADRDG), 155-195 (GHKG…RISI), 203-243 (GHTA…RAVR), 247-286 (GHEGDINSVKFFPDGQRFGTGSDDGTCRLFDVRTGHQLQV), 296-335 (NELPTVTSIAFSISGRLLFAGYSNGDCYVWDTLLAEVVLN), and 342-380 (SHEGRISCLGLSSDGSALCTGSWDKNLKIWAFSGHRKIV).

This sequence belongs to the WD repeat G protein beta family. As to quaternary structure, g proteins are composed of 3 units, alpha, beta and gamma. Interacts with the gamma subunits RGG1 and RGG2.

The protein localises to the cell membrane. Its function is as follows. Guanine nucleotide-binding proteins (G proteins) are involved as modulators or transducers in various transmembrane signaling systems. The beta and gamma chains are required for the GTPase activity, for replacement of GDP by GTP, and for G protein-effector interaction. The protein is Guanine nucleotide-binding protein subunit beta of Oryza sativa subsp. indica (Rice).